A 97-amino-acid polypeptide reads, in one-letter code: Large ribosomal subunit protein bL28 (97 aa).

Belongs to the bacterial ribosomal protein bL28 family.

The chain is Large ribosomal subunit protein bL28 from Rickettsia bellii (strain OSU 85-389).